Here is a 74-residue protein sequence, read N- to C-terminus: UPF0291 protein EF_0064 (74 aa).

The disordered stretch occupies residues 53-74 (YDPTGEDVTPEKLKEEQQKYFD). Over residues 61–74 (TPEKLKEEQQKYFD) the composition is skewed to basic and acidic residues.

It belongs to the UPF0291 family.

It is found in the cytoplasm. This is UPF0291 protein EF_0064 from Enterococcus faecalis (strain ATCC 700802 / V583).